Consider the following 569-residue polypeptide: Hexose transporter HXT8 (569 aa).

The tract at residues 1–38 (MTDRKTNLPEEPIFEEAEDDGCPSIENSSHLSVPTVEE) is disordered. Residues 1–61 (MTDRKTNLPE…EVVVPEKPAS (61 aa)) lie on the Cytoplasmic side of the membrane. Positions 12 to 21 (PIFEEAEDDG) are enriched in acidic residues. A helical transmembrane segment spans residues 62–82 (AYATVSIMCLCMAFGGFMSGW). Over 83–118 (DTGTISGFVNQTDFLRRFGNYSHSKNTYYLSNVRTG) the chain is Extracellular. Residues Asn-92 and Asn-102 are each glycosylated (N-linked (GlcNAc...) asparagine). A helical transmembrane segment spans residues 119 to 139 (LIVSIFNVGSAIGCLFLSKLG). The Cytoplasmic portion of the chain corresponds to 140–145 (DIYGRC). The chain crosses the membrane as a helical span at residues 146–166 (MGLIIVIVVYMVGIVIQIASI). Topologically, residues 167–176 (DKWYQYFIGR) are extracellular. The helical transmembrane segment at 177 to 197 (IIAGIGAGSISVLAPMLISET) threads the bilayer. The Cytoplasmic portion of the chain corresponds to 198 to 203 (APKHIR). A helical transmembrane segment spans residues 204-224 (GTLLACWQLMVTFAIFLGYCT). The Extracellular segment spans residues 225-238 (NYGTKTYSNSVQWR). A helical membrane pass occupies residues 239-259 (VPLGLCFAWAIIMIGGMTFVP). Residues 260–342 (ESPRFLVQVG…INSLQQLTGD (83 aa)) are Cytoplasmic-facing. Residues 343–359 (NYFFYYGTTIFKSVGMN) traverse the membrane as a helical segment. The Extracellular portion of the chain corresponds to 360–365 (DSFETS). A helical membrane pass occupies residues 366 to 383 (IVLGIVNFASCFFSLYSV). The Cytoplasmic portion of the chain corresponds to 384 to 390 (DKLGRRR). Residues 391 to 411 (CLLLGAATMTACMVIYASVGV) form a helical membrane-spanning segment. The Extracellular portion of the chain corresponds to 412–433 (TRLYPNGKSEPSSKGAGNCTIV). A glycan (N-linked (GlcNAc...) asparagine) is linked at Asn-429. Residues 434 to 454 (FTCFYIFCFSCTWGPVCYVII) traverse the membrane as a helical segment. Over 455 to 471 (SETFPLRVRSKCMSVAT) the chain is Cytoplasmic. The chain crosses the membrane as a helical span at residues 472–492 (AANLLWGFLIGFFTPFITSAI). Asn-493 is a topological domain (extracellular). A helical membrane pass occupies residues 494-514 (FYYGYVFMGCLAFSYFYVFFF). At 515–569 (VPETKGLTLEEVDEMWMDGVLPWKSESWVPASRRDGDYDNEKLQHDEKPFYKRMF) the chain is on the cytoplasmic side.

The protein belongs to the major facilitator superfamily. Sugar transporter (TC 2.A.1.1) family.

Its subcellular location is the membrane. Probable glucose transporter. This chain is Hexose transporter HXT8 (HXT8), found in Saccharomyces cerevisiae (strain ATCC 204508 / S288c) (Baker's yeast).